The chain runs to 66 residues: MSKLKTRSSAAKRFKVTATGKILHKKAGKRHNLSKKSESRKRRLDIPGEIKSVDRWKVERMLPYNL.

Basic residues-rich tracts occupy residues 1 to 15 (MSKLKTRSSAAKRFK) and 22 to 43 (ILHKKAGKRHNLSKKSESRKRR). Residues 1–43 (MSKLKTRSSAAKRFKVTATGKILHKKAGKRHNLSKKSESRKRR) form a disordered region.

This sequence belongs to the bacterial ribosomal protein bL35 family.

This chain is Large ribosomal subunit protein bL35, found in Dictyoglomus turgidum (strain DSM 6724 / Z-1310).